A 31-amino-acid chain; its full sequence is Cytochrome b6-f complex subunit 6 (31 aa).

Residues 4–24 (ITSYFGFLLAVLTITSALFIG) traverse the membrane as a helical segment.

The protein belongs to the PetL family. In terms of assembly, the 4 large subunits of the cytochrome b6-f complex are cytochrome b6, subunit IV (17 kDa polypeptide, PetD), cytochrome f and the Rieske protein, while the 4 small subunits are PetG, PetL, PetM and PetN. The complex functions as a dimer.

The protein resides in the plastid. It localises to the chloroplast thylakoid membrane. Component of the cytochrome b6-f complex, which mediates electron transfer between photosystem II (PSII) and photosystem I (PSI), cyclic electron flow around PSI, and state transitions. PetL is important for photoautotrophic growth as well as for electron transfer efficiency and stability of the cytochrome b6-f complex. The protein is Cytochrome b6-f complex subunit 6 of Cucumis sativus (Cucumber).